The chain runs to 1121 residues: Brassinosteroid LRR receptor kinase BRI1 (1121 aa).

Positions 1–24 (MDSLWAAIAALFVAAAVVVRGAAA) are cleaved as a signal peptide. A Cys pair 1 motif is present at residues 54-61 (CRFPGAGC). LRR repeat units lie at residues 90-114 (LGSVEVLSLRGANVSGALSAAGGAR), 116-142 (GSKLQALDLSGNAALRGSVADVAALAS), 144-167 (CGGLKTLNLSGDAVGAAKVGGGGG), 170-193 (FAGLDSLDLSNNKITDDSDLRWMV), 197-221 (VGAVRWLDLALNRISGVPEFTNCSG), 223-243 (QYLDLSGNLIVGEVPGGALSD), 244-268 (CRGLKVLNLSFNHLAGVFPPDIAGL), 269-292 (TSLNALNLSNNNFSGELPGEAFAK), 294-317 (QQLTALSLSFNHFNGSIPDTVASL), 318-341 (PELQQLDLSSNTFSGTIPSSLCQD), 343-367 (NSKLHLLYLQNNYLTGGIPDAVSNC), 369-391 (SLVSLDLSLNYINGSIPASLGDL), 392-415 (GNLQDLILWQNELEGEIPASLSRI), 416-439 (QGLEHLILDYNGLTGSIPPELAKC), 441-463 (KLNWISLASNRLSGPIPSWLGKL), 464-487 (SYLAILKLSNNSFSGPIPPELGDC), and 489-511 (SLVWLDLNSNQLNGSIPKELAKQ). Asn102 carries an N-linked (GlcNAc...) asparagine glycan. A glycan (N-linked (GlcNAc...) asparagine) is linked at Asn151. Asn218 is a glycosylation site (N-linked (GlcNAc...) asparagine). N-linked (GlcNAc...) asparagine glycans are attached at residues Asn251, Asn275, Asn280, and Asn307. N-linked (GlcNAc...) asparagine glycans are attached at residues Asn366 and Asn381. Asn473 and Asn501 each carry an N-linked (GlcNAc...) asparagine glycan. Brassinolide is bound at residue Tyr525. The stretch at 541-564 (GSLLEFTSIRPDDLSRMPSKKLCN) is one LRR 18 repeat. N-linked (GlcNAc...) asparagine glycosylation occurs at Asn564. Tyr569 contacts brassinolide. N-linked (GlcNAc...) asparagine glycosylation occurs at Asn580. 4 LRR repeats span residues 580–603 (NGSMIFLDLSYNQLDSAIPGELGD), 604–628 (MFYLMIMNLGHNLLSGTIPSRLAEA), 629–651 (KKLAVLDLSYNQLEGPIPNSFSA), and 652–676 (LSLSEINLSNNQLNGTIPELGSLAT). Residues Asn658, Asn665, and Asn684 are each glycosylated (N-linked (GlcNAc...) asparagine). Residues 689–696 (CGFPLPPC) carry the Cys pair 2 motif. A disordered region spans residues 693 to 712 (LPPCDHSSPRSSNDHQSHRR). A helical membrane pass occupies residues 719-739 (SIAMGLLFSLFCIIVIIIAIG). One can recognise a Protein kinase domain in the interval 807–1083 (FHIACQIGSG…LKVMAMFKEI (277 aa)). Residues 813 to 821 (IGSGGFGDV), Lys835, 881 to 883 (DYM), 887 to 890 (SLED), 933 to 938 (DMKSSN), and Asp951 each bind ATP. Residue Asp933 is the Proton acceptor of the active site.

It belongs to the protein kinase superfamily. Ser/Thr protein kinase family. In terms of assembly, interacts with BIP103 and BIP131. Interacts with BAK1. Interacts with BSK3. Interacts with SERK2. In terms of tissue distribution, highly expressed in shoots. Expressed at low levels in roots.

The protein localises to the cell membrane. The enzyme catalyses L-seryl-[protein] + ATP = O-phospho-L-seryl-[protein] + ADP + H(+). It carries out the reaction L-threonyl-[protein] + ATP = O-phospho-L-threonyl-[protein] + ADP + H(+). In terms of biological role, receptor kinase involved brassinosteroid (BR) signal transduction. Regulates, in response to BR binding, a signaling cascade involved in plant development, promotion of cell elongation and flowering. Activates BR signaling by targeting and phosphorylating BSK3, a positive regulator of BR signaling. Forms at the plasma membrane a receptor complex with BAK1 which is activated in response to brassinolide. Phosphorylates BAK1. Phosphorylates REM4.1, which reduces REM4.1 binding affinity to BAK1 and allows the formation and subsequent activation of the BRI1-BAK1 receptor complex. Functions in various growth and developmental processes, such as internode elongation, bending of the lamina joint and skotomorphogenesis. Functions in internode elongation by inducing the formation of the intercalary meristem and the longitudinal elongation of internode cells. Involved in organ development through the control of cell division and elongation. Does not seem essential for organ pattern formation or organ initiation. The protein is Brassinosteroid LRR receptor kinase BRI1 of Oryza sativa subsp. japonica (Rice).